Here is a 431-residue protein sequence, read N- to C-terminus: Putative F-box/FBD/LRR-repeat protein At3g56780 (431 aa).

An F-box domain is found at 6 to 62 (CSCINELPDDLILKILSFVSTKHVVVTSLLSKKWKSLWTRVPILKYDVRDHTRFERF). LRR repeat units lie at residues 56–82 (HTRF…HVEL), 88–113 (NKDI…EIDA), 135–161 (LKGI…HIDH), 162–187 (SSLF…MVIR), 209–236 (LEGL…HVAR), 237–262 (MEDF…TLEE), 264–285 (TSDV…SIIT), and 357–382 (CSER…KLEH). An FBD domain is found at 391-423 (RWEPPSLVPECLLSSLEALEWKGYTGRYGDKDL).

The chain is Putative F-box/FBD/LRR-repeat protein At3g56780 from Arabidopsis thaliana (Mouse-ear cress).